The chain runs to 268 residues: Xyloglucan endotransglucosylase protein 7 (268 aa).

Residues 1 to 196 enclose the GH16 domain; that stretch reads MNAEGGNLHR…WTKAPFTASY (196 aa). Glu-82 functions as the Nucleophile in the catalytic mechanism. Glu-86 functions as the Proton donor in the catalytic mechanism. A xyloglucan-binding site is contributed by Glu-86. N-linked (GlcNAc...) asparagine glycosylation is present at Asn-90. Residues 99-101, 109-111, 175-176, and Gly-180 contribute to the xyloglucan site; these read HTN, NRE, and DW. Cystine bridges form between Cys-204–Cys-213 and Cys-251–Cys-265. Arg-256 provides a ligand contact to xyloglucan.

It belongs to the glycosyl hydrolase 16 family. XTH group 2 subfamily. In terms of processing, contains at least one intrachain disulfide bond essential for its enzymatic activity. Expressed at a very high level in flowers and stems (picked at anthesis), and at a lower level in ripe leaves and fruits.

The protein localises to the cytoplasm. The catalysed reaction is breaks a beta-(1-&gt;4) bond in the backbone of a xyloglucan and transfers the xyloglucanyl segment on to O-4 of the non-reducing terminal glucose residue of an acceptor, which can be a xyloglucan or an oligosaccharide of xyloglucan.. Its function is as follows. Catalyzes xyloglucan endotransglycosylation (XET). Cleaves and religates xyloglucan polymers. Does not catalyze xyloglucan endohydrolysis (XEH). Probably involved in cell wall assembly and synthesis in fast growing tissues and in the maintenance of firmness in mature fruits. The protein is Xyloglucan endotransglucosylase protein 7 of Diospyros kaki (Kaki persimmon).